The chain runs to 358 residues: MSARIRPDLSSIPAYTPGRSNPGAVKLASNETTLPPLPAAAKAIAEAAELAHRYPDNQSGELRAALAEFLGVRVENVAIGCGSVALCQELVQITCSSPRDEVLFAWRSFEAYPIITQVGNATAVQVPLSPDYAHDLDALAAAVTEHTRLIFVCNPNNPTGTAHGRAALERFLDAVPAHVLVVLDEAYYEYMRLTPQDRPDGVEVGRNRPNVVVLRTFSKAYGLAGLRVGYAVGDPEVITALMKVHIPFSVNRVAQAAAIASLEARHELLERTEAVIVERERLREALLAAGYDVPPSETNFVWLPLGAHSAEFGEASAAAGVLVRPYGTDGVRVTVGDPHENEMFLRFAADPAVVARFR.

K219 carries the post-translational modification N6-(pyridoxal phosphate)lysine.

Belongs to the class-II pyridoxal-phosphate-dependent aminotransferase family. Homodimer. Pyridoxal 5'-phosphate is required as a cofactor.

The catalysed reaction is an aromatic L-alpha-amino acid + 2-oxoglutarate = an aromatic oxo-acid + L-glutamate. In terms of biological role, aminotransferase that catalyzes the conversion of aromatic amino acids and 2-oxoglutarate into corresponding aromatic oxo acids and L-glutamate. In Nocardia farcinica (strain IFM 10152), this protein is Aromatic amino acid aminotransferase.